The sequence spans 308 residues: UDP-N-acetylenolpyruvoylglucosamine reductase (308 aa).

The FAD-binding PCMH-type domain maps to 32-196; it reads VGGPAARLYK…ISAKLQLSPG (165 aa). Arg-176 is an active-site residue. The active-site Proton donor is Ser-225. Glu-296 is a catalytic residue.

It belongs to the MurB family. Requires FAD as cofactor.

Its subcellular location is the cytoplasm. The enzyme catalyses UDP-N-acetyl-alpha-D-muramate + NADP(+) = UDP-N-acetyl-3-O-(1-carboxyvinyl)-alpha-D-glucosamine + NADPH + H(+). It functions in the pathway cell wall biogenesis; peptidoglycan biosynthesis. In terms of biological role, cell wall formation. The sequence is that of UDP-N-acetylenolpyruvoylglucosamine reductase from Legionella pneumophila (strain Corby).